A 253-amino-acid chain; its full sequence is Cholesterol ring-cleaving hydrolase IpdB subunit (253 aa).

It belongs to the 3-oxoacid CoA-transferase subunit B family. Heterotetramer composed of 2 IpdA subunits and 2 IpdB subunits.

The enzyme catalyses (3E)-2-(2-carboxylatoethyl)-3-methyl-6-oxocyclohex-1-ene-1-carboxyl-CoA + H2O = 6-methyl-3,7-dioxodecanedioyl-CoA. Its pathway is steroid metabolism; cholesterol degradation. Its function is as follows. Involved in the final steps of cholesterol and steroid degradation. Opens the last steroid ring of cholesterol by catalyzing the hydrolysis of (3E)-2-(2-carboxylatoethyl)-3-methyl-6-oxocyclohex-1-ene-1-carboxyl-CoA (COCHEA-CoA) to 6-methyl-3,7-dioxodecanedioyl-CoA (MeDODA-CoA). The chain is Cholesterol ring-cleaving hydrolase IpdB subunit from Rhodococcus jostii (strain RHA1).